We begin with the raw amino-acid sequence, 606 residues long: Sulfite reductase [NADPH] flavoprotein alpha-component (606 aa).

The 139-residue stretch at 68-206 (ITILSASQTG…AAEAWRKEVT (139 aa)) folds into the Flavodoxin-like domain. FMN contacts are provided by residues 74 to 79 (SQTGNA), 121 to 124 (STQG), and 157 to 166 (LGDITYEHFA). The region spanning 240-454 (ESPLTATLSV…VEHNDNFRLP (215 aa)) is the FAD-binding FR-type domain. FAD contacts are provided by residues Thr-328, Gln-362, 392–395 (RLYS), 410–412 (TVG), Tyr-416, and 425–428 (GGAS). NADP(+) contacts are provided by residues 525–526 (SR), 531–535 (KVYVQ), and Asp-568. Tyr-606 serves as a coordination point for FAD.

The protein belongs to the NADPH-dependent sulphite reductase flavoprotein subunit CysJ family. This sequence in the N-terminal section; belongs to the flavodoxin family. It in the C-terminal section; belongs to the flavoprotein pyridine nucleotide cytochrome reductase family. In terms of assembly, alpha(8)-beta(8). The alpha component is a flavoprotein, the beta component is a hemoprotein. FAD is required as a cofactor. The cofactor is FMN.

The catalysed reaction is hydrogen sulfide + 3 NADP(+) + 3 H2O = sulfite + 3 NADPH + 4 H(+). The protein operates within sulfur metabolism; hydrogen sulfide biosynthesis; hydrogen sulfide from sulfite (NADPH route): step 1/1. Functionally, component of the sulfite reductase complex that catalyzes the 6-electron reduction of sulfite to sulfide. This is one of several activities required for the biosynthesis of L-cysteine from sulfate. The flavoprotein component catalyzes the electron flow from NADPH -&gt; FAD -&gt; FMN to the hemoprotein component. This is Sulfite reductase [NADPH] flavoprotein alpha-component from Zymomonas mobilis subsp. mobilis (strain ATCC 31821 / ZM4 / CP4).